Reading from the N-terminus, the 714-residue chain is Fatty acid oxidation complex subunit alpha (714 aa).

An enoyl-CoA hydratase region spans residues 1–190; that stretch reads MEMASAFTLN…KLGLVDDVVP (190 aa). The interval 306 to 714 is 3-hydroxyacyl-CoA dehydrogenase; that stretch reads APLNSVGILG…FWKTTATDLQ (409 aa).

It in the N-terminal section; belongs to the enoyl-CoA hydratase/isomerase family. This sequence in the central section; belongs to the 3-hydroxyacyl-CoA dehydrogenase family. As to quaternary structure, heterotetramer of two alpha chains (FadJ) and two beta chains (FadI).

It localises to the cytoplasm. It carries out the reaction a (3S)-3-hydroxyacyl-CoA = a (2E)-enoyl-CoA + H2O. It catalyses the reaction a 4-saturated-(3S)-3-hydroxyacyl-CoA = a (3E)-enoyl-CoA + H2O. The enzyme catalyses a (3S)-3-hydroxyacyl-CoA + NAD(+) = a 3-oxoacyl-CoA + NADH + H(+). The catalysed reaction is (3S)-3-hydroxybutanoyl-CoA = (3R)-3-hydroxybutanoyl-CoA. It functions in the pathway lipid metabolism; fatty acid beta-oxidation. In terms of biological role, catalyzes the formation of a hydroxyacyl-CoA by addition of water on enoyl-CoA. Also exhibits 3-hydroxyacyl-CoA epimerase and 3-hydroxyacyl-CoA dehydrogenase activities. This Escherichia coli (strain ATCC 8739 / DSM 1576 / NBRC 3972 / NCIMB 8545 / WDCM 00012 / Crooks) protein is Fatty acid oxidation complex subunit alpha.